Consider the following 2111-residue polypeptide: Glutamate synthase [NADH] (2111 aa).

Cysteine 69 (nucleophile) is an active-site residue. The Glutamine amidotransferase type-2 domain maps to 69–469 (CGVGFTCHIK…PGRMLLVDTK (401 aa)). Residues 969-990 (GGKSNTGEGGEDPARSQRLANG) are disordered. Residue 1139 to 1191 (VAETHQTLVLNDLRGRVVIQTDGQIRTGRDVAIACLLGAEEWGFATTPLIALG) coordinates FMN. [3Fe-4S] cluster is bound by residues cysteine 1192, cysteine 1198, and cysteine 1203.

This sequence belongs to the glutamate synthase family. Homotrimer. Requires [3Fe-4S] cluster as cofactor. It depends on FAD as a cofactor. FMN is required as a cofactor.

It is found in the cytoplasm. It carries out the reaction 2 L-glutamate + NAD(+) = L-glutamine + 2-oxoglutarate + NADH + H(+). It functions in the pathway amino-acid biosynthesis; L-glutamate biosynthesis via GLT pathway; L-glutamate from 2-oxoglutarate and L-glutamine (NAD(+) route): step 1/1. The protein operates within energy metabolism; nitrogen metabolism. Its activity is regulated as follows. In the presence of 10 mM allantoin, the activity is reduced more than 25%. Functionally, forms L-glutamate from L-glutamine and 2-oxoglutarate. Represents an alternative pathway to L-glutamate dehydrogenase for the biosynthesis of L-glutamate. Participates with glutamine synthetase in ammonia assimilation processes. The enzyme is specific for NADH, L-glutamine and 2-oxoglutarate. This chain is Glutamate synthase [NADH] (glt1), found in Schizosaccharomyces pombe (strain 972 / ATCC 24843) (Fission yeast).